We begin with the raw amino-acid sequence, 421 residues long: Glutamate dehydrogenase (421 aa).

Lysine 105 is an active-site residue. 220–226 contacts NAD(+); that stretch reads GYGNAGY.

Belongs to the Glu/Leu/Phe/Val dehydrogenases family. Homohexamer.

The protein resides in the cytoplasm. It is found in the chromosome. The catalysed reaction is L-glutamate + NAD(+) + H2O = 2-oxoglutarate + NH4(+) + NADH + H(+). It carries out the reaction L-glutamate + NADP(+) + H2O = 2-oxoglutarate + NH4(+) + NADPH + H(+). This is Glutamate dehydrogenase (gdhA) from Thermococcus kodakarensis (strain ATCC BAA-918 / JCM 12380 / KOD1) (Pyrococcus kodakaraensis (strain KOD1)).